Reading from the N-terminus, the 281-residue chain is Probable endonuclease 4 (281 aa).

9 residues coordinate Zn(2+): histidine 67, histidine 107, glutamate 142, aspartate 176, histidine 179, histidine 211, aspartate 224, histidine 226, and glutamate 256.

This sequence belongs to the AP endonuclease 2 family. Requires Zn(2+) as cofactor.

The catalysed reaction is Endonucleolytic cleavage to 5'-phosphooligonucleotide end-products.. Endonuclease IV plays a role in DNA repair. It cleaves phosphodiester bonds at apurinic or apyrimidinic (AP) sites, generating a 3'-hydroxyl group and a 5'-terminal sugar phosphate. The protein is Probable endonuclease 4 of Alkaliphilus oremlandii (strain OhILAs) (Clostridium oremlandii (strain OhILAs)).